The primary structure comprises 929 residues: Leucine--tRNA ligase (929 aa).

The 'HIGH' region signature appears at 42–52; that stretch reads PYPSGNLHMGH. Residues 614 to 618 carry the 'KMSKS' region motif; that stretch reads KMSKS. Lys617 lines the ATP pocket.

Belongs to the class-I aminoacyl-tRNA synthetase family.

It is found in the cytoplasm. The catalysed reaction is tRNA(Leu) + L-leucine + ATP = L-leucyl-tRNA(Leu) + AMP + diphosphate. This chain is Leucine--tRNA ligase, found in Trichodesmium erythraeum (strain IMS101).